The chain runs to 226 residues: Ribonuclease 3 (226 aa).

The 123-residue stretch at Ile-6–Asn-128 folds into the RNase III domain. Residue Glu-41 participates in Mg(2+) binding. Asp-45 is an active-site residue. Positions 114 and 117 each coordinate Mg(2+). Residue Glu-117 is part of the active site. Residues Asp-155 to Ile-225 enclose the DRBM domain.

The protein belongs to the ribonuclease III family. In terms of assembly, homodimer. The cofactor is Mg(2+).

Its subcellular location is the cytoplasm. The enzyme catalyses Endonucleolytic cleavage to 5'-phosphomonoester.. Its function is as follows. Digests double-stranded RNA. Involved in the processing of primary rRNA transcript to yield the immediate precursors to the large and small rRNAs (23S and 16S). Processes some mRNAs, and tRNAs when they are encoded in the rRNA operon. Processes pre-crRNA and tracrRNA of type II CRISPR loci if present in the organism. The chain is Ribonuclease 3 from Buchnera aphidicola subsp. Baizongia pistaciae (strain Bp).